Consider the following 115-residue polypeptide: Large ribosomal subunit protein P2 (115 aa).

At Met1 the chain carries N-acetylmethionine. Residues Ser17 and Ser19 each carry the phosphoserine modification. Lys21 bears the N6-acetyllysine; alternate mark. Lys21 is modified (N6-succinyllysine; alternate). Residues 76–90 (APGSAAPAAGSAPAA) show a composition bias toward low complexity. The interval 76-115 (APGSAAPAAGSAPAAAEEKKDEKKEESEESDDDMGFGLFD) is disordered. Phosphoserine is present on residues Ser79 and Ser86. Residues 91 to 101 (AEEKKDEKKEE) are compositionally biased toward basic and acidic residues. Phosphoserine occurs at positions 102 and 105.

This sequence belongs to the eukaryotic ribosomal protein P1/P2 family. In terms of assembly, heterodimer with RPLP1 at the lateral ribosomal stalk of the large ribosomal subunit.

Plays an important role in the elongation step of protein synthesis. In Mus musculus (Mouse), this protein is Large ribosomal subunit protein P2 (Rplp2).